Consider the following 252-residue polypeptide: Triosephosphate isomerase (252 aa).

9–11 (NWK) lines the substrate pocket. The Electrophile role is filled by His-98. Glu-170 acts as the Proton acceptor in catalysis. Residues Gly-176 and Ser-215 each coordinate substrate.

It belongs to the triosephosphate isomerase family. As to quaternary structure, homodimer.

Its subcellular location is the cytoplasm. The enzyme catalyses D-glyceraldehyde 3-phosphate = dihydroxyacetone phosphate. Its pathway is carbohydrate biosynthesis; gluconeogenesis. It functions in the pathway carbohydrate degradation; glycolysis; D-glyceraldehyde 3-phosphate from glycerone phosphate: step 1/1. Functionally, involved in the gluconeogenesis. Catalyzes stereospecifically the conversion of dihydroxyacetone phosphate (DHAP) to D-glyceraldehyde-3-phosphate (G3P). The protein is Triosephosphate isomerase of Buchnera aphidicola subsp. Baizongia pistaciae (strain Bp).